Consider the following 583-residue polypeptide: Fumarate reductase flavoprotein subunit (583 aa).

FAD contacts are provided by residues 11-15, 35-37, 43-51, 155-157, and Asp-211; these read GGGGA, VSK, SHTVSAEGG, and WFA. Tele-8alpha-FAD histidine is present on His-44. Residues His-232 and Arg-248 contribute to the active site. FAD is bound by residues 353-354, Glu-377, and 388-394; these read HY and RLGSNSL.

Belongs to the FAD-dependent oxidoreductase 2 family. FRD/SDH subfamily. In terms of assembly, part of an enzyme complex containing four subunits: a flavoprotein (FrdA), an iron-sulfur protein (FrdB), and two hydrophobic anchor proteins (FrdC and FrdD). FAD serves as cofactor.

The protein resides in the cell membrane. It carries out the reaction a quinone + succinate = fumarate + a quinol. The catalysed reaction is a menaquinone + succinate = a menaquinol + fumarate. The protein is Fumarate reductase flavoprotein subunit (frdA) of Mycobacterium tuberculosis (strain CDC 1551 / Oshkosh).